A 517-amino-acid chain; its full sequence is Facilitated trehalose transporter Tret1 (517 aa).

Over 1-56 (MWIEIPECYEVLRNVFSKFRRHSLTAAMVKLLMRADTHVSFTVPAEEPVAKCTFSQ) the chain is Cytoplasmic. A helical transmembrane segment spans residues 57–77 (VLAALSVSLGSMVVGFSSAYT). Residues 78–100 (SPALVSMKDRNITSFEVTDQSGS) lie on the Extracellular side of the membrane. N88 carries an N-linked (GlcNAc...) asparagine glycan. A helical membrane pass occupies residues 101-121 (WVGGIMPLAGLVGGILGGPLI). At 122–135 (EYLGRKNTILATAT) the chain is on the cytoplasmic side. Residues 136–156 (PFIISWLLIACATHVAMVLVG) form a helical membrane-spanning segment. The Extracellular segment spans residues 157-158 (RA). A helical membrane pass occupies residues 159 to 179 (LSGFSVGVASLSLPVYLGETV). At 180–184 (QPEVR) the chain is on the cytoplasmic side. The helical transmembrane segment at 185–205 (GTLGLLPTAFGNIGILLCFVA) threads the bilayer. Topologically, residues 206–212 (GNYMDWS) are extracellular. The chain crosses the membrane as a helical span at residues 213 to 233 (ELAFLGATLPVPFLILMFLIP). The Cytoplasmic portion of the chain corresponds to 234-296 (ETPRWYVSRG…DLLKKTNLKP (63 aa)). The helical transmembrane segment at 297 to 317 (LLISLGLMFFQQLSGINAVIF) threads the bilayer. Residues 318-333 (YTVQIFQDAGSTIDEN) lie on the Extracellular side of the membrane. Residues 334 to 354 (LCTIIVGVVNFIATFIATLLI) traverse the membrane as a helical segment. Residues 355–360 (DRLGRK) lie on the Cytoplasmic side of the membrane. The chain crosses the membrane as a helical span at residues 361–381 (MLLYISDIAMIITLMTLGGFF). Over 382-392 (YVKNNGGDVSH) the chain is Extracellular. The helical transmembrane segment at 393 to 413 (IGWLPLASFVIFVLGFSLGFG) threads the bilayer. Residues 414 to 437 (PIPWLMMGEILPGKIRGSAASVAT) lie on the Cytoplasmic side of the membrane. A helical transmembrane segment spans residues 438–458 (AFNWSCTFVVTKTFADIIASI). The Extracellular portion of the chain corresponds to 459 to 461 (GTH). A helical transmembrane segment spans residues 462-482 (GAFWMFGSVCVVGLVFVIMYV). Residues 483–517 (PETQGKSLEDIERKMCGRVRRMSSVANIKPLSFNM) are Cytoplasmic-facing.

The protein belongs to the major facilitator superfamily. Sugar transporter (TC 2.A.1.1) family. Trehalose transporter subfamily.

It is found in the cell membrane. In terms of biological role, high-capacity facilitative transporter for trehalose. Does not transport maltose, sucrose or lactose. Mediates the bidirectional transfer of trehalose. Responsible for the transport of trehalose synthesized in the fat body and the incorporation of trehalose into other tissues that require a carbon source, thereby regulating trehalose levels in the hemolymph. This chain is Facilitated trehalose transporter Tret1, found in Culex quinquefasciatus (Southern house mosquito).